Here is a 262-residue protein sequence, read N- to C-terminus: 26 kDa secreted antigen (262 aa).

The N-terminal stretch at Met-1 to Gln-21 is a signal peptide. ShKT domains follow at residues Cys-23 to Cys-57 and Cys-59 to Cys-93. Disulfide bonds link Cys-23/Cys-57, Cys-30/Cys-50, Cys-37/Cys-54, Cys-59/Cys-93, Cys-66/Cys-86, and Cys-73/Cys-90.

This sequence belongs to the phosphatidylethanolamine-binding protein family.

It is found in the secreted. Binds phosphatidylethanolamine. The protein is 26 kDa secreted antigen (TES-26) of Toxocara canis (Canine roundworm).